We begin with the raw amino-acid sequence, 295 residues long: Large ribosomal subunit protein uL15m (295 aa).

The N-terminal 20 residues, 1–20 (MAGTARGCGTSLDLLRSLPR), are a transit peptide targeting the mitochondrion. Residues 21–67 (VSLANLKPSPNSRKRERRPRDRRRGRKCGRGHKGERQRGTRPRLGFE) form a disordered region. Over residues 32–51 (SRKRERRPRDRRRGRKCGRG) the composition is skewed to basic residues.

The protein belongs to the universal ribosomal protein uL15 family. As to quaternary structure, component of the mitochondrial ribosome large subunit (39S) which comprises a 16S rRNA and about 50 distinct proteins.

The protein localises to the mitochondrion. The protein is Large ribosomal subunit protein uL15m (Mrpl15) of Mus musculus (Mouse).